A 101-amino-acid chain; its full sequence is Putative septation protein SpoVG (101 aa).

It belongs to the SpoVG family.

Could be involved in septation. The polypeptide is Putative septation protein SpoVG (Staphylococcus saprophyticus subsp. saprophyticus (strain ATCC 15305 / DSM 20229 / NCIMB 8711 / NCTC 7292 / S-41)).